Consider the following 167-residue polypeptide: Phosphopantetheine adenylyltransferase (167 aa).

Residue Thr9 coordinates substrate. Residues 9–10 (TF) and His17 contribute to the ATP site. Residues Lys41, Leu73, and Arg87 each coordinate substrate. ATP-binding positions include 88–90 (GLR), Glu98, and 123–129 (NSYISST).

The protein belongs to the bacterial CoaD family. As to quaternary structure, homohexamer. Requires Mg(2+) as cofactor.

It is found in the cytoplasm. The catalysed reaction is (R)-4'-phosphopantetheine + ATP + H(+) = 3'-dephospho-CoA + diphosphate. The protein operates within cofactor biosynthesis; coenzyme A biosynthesis; CoA from (R)-pantothenate: step 4/5. In terms of biological role, reversibly transfers an adenylyl group from ATP to 4'-phosphopantetheine, yielding dephospho-CoA (dPCoA) and pyrophosphate. The sequence is that of Phosphopantetheine adenylyltransferase from Chromohalobacter salexigens (strain ATCC BAA-138 / DSM 3043 / CIP 106854 / NCIMB 13768 / 1H11).